Here is a 329-residue protein sequence, read N- to C-terminus: GDP-mannose transporter (329 aa).

Over 1–13 the chain is Cytoplasmic; that stretch reads MSELKVDTGRLSH. The chain crosses the membrane as a helical span at residues 14-34; it reads IANSGPMSILAYCASSILMTV. Residues 35–44 lie on the Lumenal side of the membrane; that stretch reads TNKCVVGSDK. Residues 45–65 traverse the membrane as a helical segment; it reads FNMLFVMLFAQSLVCVTALVL. Topologically, residues 66 to 79 are cytoplasmic; it reads LKALGYVQYRPLNK. Residues 80-100 traverse the membrane as a helical segment; that stretch reads VDVKNWLLISVLLVLMTYTSS. Residues 101 to 109 lie on the Lumenal side of the membrane; that stretch reads RALKYLAVP. The chain crosses the membrane as a helical span at residues 110–130; sequence IYTIFKNLTIILIAYGEVLFF. The Cytoplasmic segment spans residues 131–133; that stretch reads GGR. The helical transmembrane segment at 134–154 threads the bilayer; the sequence is VTAMELSSFLLIVLSSVVATL. Topologically, residues 155–174 are lumenal; sequence GDQQALAKKPLAAAVESILG. Residues 175-195 form a helical membrane-spanning segment; the sequence is LNVGYFWMFTNCICSALFVLI. The Cytoplasmic segment spans residues 196 to 214; sequence MRKRIALTKFKDFDTMFYN. The helical transmembrane segment at 215 to 235 threads the bilayer; the sequence is NILSLPLLMLASFMFEDWGAA. The Lumenal segment spans residues 236–245; that stretch reads NIARNLTKDY. A glycan (N-linked (GlcNAc...) asparagine) is linked at asparagine 240. Residues 246–266 traverse the membrane as a helical segment; that stretch reads IIIMIISGLASVGISYCSGWC. Topologically, residues 267–273 are cytoplasmic; that stretch reads VRVTSST. A helical transmembrane segment spans residues 274 to 294; sequence TYSMVGALNKLPIALSGLLFF. The Lumenal portion of the chain corresponds to 295–298; the sequence is DAPK. The helical transmembrane segment at 299 to 319 threads the bilayer; the sequence is NFLSIFSIFLGFLSGIVYAVA. Over 320–329 the chain is Cytoplasmic; it reads KQKKQSQPAN.

The protein belongs to the TPT transporter family. SLC35D subfamily. Homooligomer.

Its subcellular location is the golgi apparatus membrane. It is found in the cytoplasmic vesicle membrane. It localises to the endoplasmic reticulum membrane. Its function is as follows. Involved in the import of GDP-mannose from the cytoplasm into the Golgi lumen. The sequence is that of GDP-mannose transporter (VRG4) from Eremothecium gossypii (strain ATCC 10895 / CBS 109.51 / FGSC 9923 / NRRL Y-1056) (Yeast).